The primary structure comprises 261 residues: 5'-nucleotidase SurE (261 aa).

Positions 17, 18, 48, and 104 each coordinate a divalent metal cation.

This sequence belongs to the SurE nucleotidase family. It depends on a divalent metal cation as a cofactor.

The protein localises to the cytoplasm. It catalyses the reaction a ribonucleoside 5'-phosphate + H2O = a ribonucleoside + phosphate. In terms of biological role, nucleotidase that shows phosphatase activity on nucleoside 5'-monophosphates. The chain is 5'-nucleotidase SurE from Deinococcus geothermalis (strain DSM 11300 / CIP 105573 / AG-3a).